The following is a 155-amino-acid chain: S-ribosylhomocysteine lyase (155 aa).

Residues H58, H62, and C125 each contribute to the Fe cation site.

It belongs to the LuxS family. Homodimer. It depends on Fe cation as a cofactor.

It catalyses the reaction S-(5-deoxy-D-ribos-5-yl)-L-homocysteine = (S)-4,5-dihydroxypentane-2,3-dione + L-homocysteine. Involved in the synthesis of autoinducer 2 (AI-2) which is secreted by bacteria and is used to communicate both the cell density and the metabolic potential of the environment. The regulation of gene expression in response to changes in cell density is called quorum sensing. Catalyzes the transformation of S-ribosylhomocysteine (RHC) to homocysteine (HC) and 4,5-dihydroxy-2,3-pentadione (DPD). This Helicobacter pylori (strain P12) protein is S-ribosylhomocysteine lyase.